The sequence spans 376 residues: Heme chaperone HemW (376 aa).

The Radical SAM core domain maps to 1-233 (MFTLPPISLY…DKLLKKAGYK (233 aa)). Residue Tyr-10 participates in S-adenosyl-L-methionine binding. Residues Cys-16, Cys-20, and Cys-23 each coordinate [4Fe-4S] cluster. Residues Gly-66, 67–68 (GT), Glu-99, Gln-126, Arg-138, and Asp-162 contribute to the S-adenosyl-L-methionine site.

Belongs to the anaerobic coproporphyrinogen-III oxidase family. HemW subfamily. [4Fe-4S] cluster serves as cofactor.

It is found in the cytoplasm. In terms of biological role, probably acts as a heme chaperone, transferring heme to an unknown acceptor. Binds one molecule of heme per monomer, possibly covalently. Binds 1 [4Fe-4S] cluster. The cluster is coordinated with 3 cysteines and an exchangeable S-adenosyl-L-methionine. This Buchnera aphidicola subsp. Acyrthosiphon pisum (strain APS) (Acyrthosiphon pisum symbiotic bacterium) protein is Heme chaperone HemW.